Here is a 404-residue protein sequence, read N- to C-terminus: Lipase lipl-3 (404 aa).

The signal sequence occupies residues 1-20 (MCSSLCALLLVILAVHNVHA). Asn-65 carries an N-linked (GlcNAc...) asparagine glycan. The active-site Nucleophile is Ser-168. N-linked (GlcNAc...) asparagine glycosylation occurs at Asn-272. Active-site charge relay system residues include Asp-344 and His-376.

Belongs to the AB hydrolase superfamily. Lipase family.

The protein localises to the secreted. Its subcellular location is the lysosome lumen. Lipase that, together with lipl-1, plays a role in the response to nutrient deprivation by controlling lipid metabolism. Specifically, involved in the breakdown of lipids during lipophagy, a process during which lipids contained in lipid droplets that have been delivered to lysosomes by autophagy are degraded. The protein is Lipase lipl-3 of Caenorhabditis elegans.